The following is a 401-amino-acid chain: S-adenosylmethionine synthase (401 aa).

His-15 lines the ATP pocket. Asp-17 serves as a coordination point for Mg(2+). A K(+)-binding site is contributed by Glu-48. 2 residues coordinate L-methionine: Glu-61 and Gln-104. Residues 104 to 114 are flexible loop; sequence QSPDIALGVDR. ATP contacts are provided by residues 179-181, 246-247, Asp-255, 261-262, Ala-278, and Lys-282; these read DGK, RF, and RK. L-methionine is bound at residue Asp-255. Lys-286 is a binding site for L-methionine.

The protein belongs to the AdoMet synthase family. In terms of assembly, homotetramer; dimer of dimers. It depends on Mg(2+) as a cofactor. Requires K(+) as cofactor.

It is found in the cytoplasm. It catalyses the reaction L-methionine + ATP + H2O = S-adenosyl-L-methionine + phosphate + diphosphate. It functions in the pathway amino-acid biosynthesis; S-adenosyl-L-methionine biosynthesis; S-adenosyl-L-methionine from L-methionine: step 1/1. In terms of biological role, catalyzes the formation of S-adenosylmethionine (AdoMet) from methionine and ATP. The overall synthetic reaction is composed of two sequential steps, AdoMet formation and the subsequent tripolyphosphate hydrolysis which occurs prior to release of AdoMet from the enzyme. This Petrotoga mobilis (strain DSM 10674 / SJ95) protein is S-adenosylmethionine synthase.